Here is a 392-residue protein sequence, read N- to C-terminus: uncharacterized protein (392 aa).

It belongs to the chlamydial CPn_0675/CT_696/TC_0068 family.

This is an uncharacterized protein from Chlamydia muridarum (strain MoPn / Nigg).